A 527-amino-acid chain; its full sequence is Amine oxidase [flavin-containing] A (527 aa).

An N-acetylmethionine modification is found at M1. Topologically, residues 1 to 497 (MERQEKANNA…RTFWERNLPS (497 aa)) are cytoplasmic. S383 is modified (phosphoserine). Residue C406 is modified to S-8alpha-FAD cysteine. Residues 498–518 (VTGLLKIIGFSTSVTALWLAV) form a helical; Anchor for type IV membrane protein membrane-spanning segment. The Mitochondrial intermembrane segment spans residues 519-527 (YKFRLLTRS). Residues 520–522 (KFR) form an interaction with membrane phospholipid headgroups region.

It belongs to the flavin monoamine oxidase family. Monomer, homo- or heterodimer (containing two subunits of similar size). Each subunit contains a covalently bound flavin. Enzymatically active as monomer. FAD serves as cofactor.

Its subcellular location is the mitochondrion outer membrane. It catalyses the reaction a secondary aliphatic amine + O2 + H2O = a primary amine + an aldehyde + H2O2. It carries out the reaction a primary methyl amine + O2 + H2O = an aldehyde + H2O2 + NH4(+). The enzyme catalyses (R)-adrenaline + O2 + H2O = (R)-3,4-dihydroxymandelaldehyde + methylamine + H2O2. The catalysed reaction is dopamine + O2 + H2O = 3,4-dihydroxyphenylacetaldehyde + H2O2 + NH4(+). It catalyses the reaction tyramine + O2 + H2O = (4-hydroxyphenyl)acetaldehyde + H2O2 + NH4(+). It carries out the reaction (R)-noradrenaline + O2 + H2O = (R)-3,4-dihydroxymandelaldehyde + H2O2 + NH4(+). The enzyme catalyses serotonin + O2 + H2O = (5-hydroxyindol-3-yl)acetaldehyde + H2O2 + NH4(+). The catalysed reaction is kynuramine + O2 + H2O = 3-(2-aminophenyl)-3-oxopropanal + H2O2 + NH4(+). It catalyses the reaction tryptamine + O2 + H2O = indole-3-acetaldehyde + H2O2 + NH4(+). It carries out the reaction 2-phenylethylamine + O2 + H2O = 2-phenylacetaldehyde + H2O2 + NH4(+). In terms of biological role, catalyzes the oxidative deamination of primary and some secondary amine such as neurotransmitters, with concomitant reduction of oxygen to hydrogen peroxide and has important functions in the metabolism of neuroactive and vasoactive amines in the central nervous system and peripheral tissues. Preferentially oxidizes serotonin. Also catalyzes the oxidative deamination of kynuramine to 3-(2-aminophenyl)-3-oxopropanal that can spontaneously condense to 4-hydroxyquinoline. The sequence is that of Amine oxidase [flavin-containing] A from Sus scrofa (Pig).